The chain runs to 1203 residues: ATP-dependent helicase/nuclease subunit A (1203 aa).

One can recognise a UvrD-like helicase ATP-binding domain in the interval 4-472 (VKLTPEQNEA…IRLKENFRSR (469 aa)). 25-32 (ASAGSGKT) is a binding site for ATP. Residues 503–785 (VQGNISDYPV…RVMTFHKSKG (283 aa)) enclose the UvrD-like helicase C-terminal domain.

It belongs to the helicase family. AddA subfamily. As to quaternary structure, heterodimer of AddA and AddB/RexB. The cofactor is Mg(2+).

The catalysed reaction is Couples ATP hydrolysis with the unwinding of duplex DNA by translocating in the 3'-5' direction.. It catalyses the reaction ATP + H2O = ADP + phosphate + H(+). Its function is as follows. The heterodimer acts as both an ATP-dependent DNA helicase and an ATP-dependent, dual-direction single-stranded exonuclease. Recognizes the chi site generating a DNA molecule suitable for the initiation of homologous recombination. The AddA nuclease domain is required for chi fragment generation; this subunit has the helicase and 3' -&gt; 5' nuclease activities. This is ATP-dependent helicase/nuclease subunit A from Lactococcus lactis subsp. cremoris (strain SK11).